A 149-amino-acid chain; its full sequence is Large ribosomal subunit protein bL9 (149 aa).

Belongs to the bacterial ribosomal protein bL9 family.

Its function is as follows. Binds to the 23S rRNA. The polypeptide is Large ribosomal subunit protein bL9 (Helicobacter pylori (strain ATCC 700392 / 26695) (Campylobacter pylori)).